Consider the following 288-residue polypeptide: ATP synthase gamma chain (288 aa).

The protein belongs to the ATPase gamma chain family. In terms of assembly, F-type ATPases have 2 components, CF(1) - the catalytic core - and CF(0) - the membrane proton channel. CF(1) has five subunits: alpha(3), beta(3), gamma(1), delta(1), epsilon(1). CF(0) has three main subunits: a, b and c.

Its subcellular location is the cell inner membrane. Functionally, produces ATP from ADP in the presence of a proton gradient across the membrane. The gamma chain is believed to be important in regulating ATPase activity and the flow of protons through the CF(0) complex. This chain is ATP synthase gamma chain, found in Rickettsia prowazekii (strain Madrid E).